We begin with the raw amino-acid sequence, 354 residues long: 3-dehydroquinate synthase (354 aa).

NAD(+) contacts are provided by residues 69–74 (DGEAEK), 103–107 (GVIGD), 127–128 (TS), Lys-140, and Lys-149. Glu-182, His-245, and His-262 together coordinate Zn(2+).

This sequence belongs to the sugar phosphate cyclases superfamily. Dehydroquinate synthase family. It depends on Co(2+) as a cofactor. Zn(2+) is required as a cofactor. The cofactor is NAD(+).

It is found in the cytoplasm. It carries out the reaction 7-phospho-2-dehydro-3-deoxy-D-arabino-heptonate = 3-dehydroquinate + phosphate. It functions in the pathway metabolic intermediate biosynthesis; chorismate biosynthesis; chorismate from D-erythrose 4-phosphate and phosphoenolpyruvate: step 2/7. Catalyzes the conversion of 3-deoxy-D-arabino-heptulosonate 7-phosphate (DAHP) to dehydroquinate (DHQ). The polypeptide is 3-dehydroquinate synthase (Colwellia psychrerythraea (strain 34H / ATCC BAA-681) (Vibrio psychroerythus)).